Consider the following 505-residue polypeptide: Beta-agarase (505 aa).

The signal sequence occupies residues 1–23; it reads MLKVIPWLLVTSSLVAIPTYIHA. Residue E200 is the Proton donor of the active site. Residue E322 is the Nucleophile of the active site.

It belongs to the glycosyl hydrolase 86 family.

The protein localises to the secreted. The enzyme catalyses Hydrolysis of (1-&gt;4)-beta-D-galactosidic linkages in agarose, giving the tetramer as the predominant product.. Its function is as follows. Hydrolase that cleaves agar at the (1-&gt;4) linkage, producing tetrameric saccharide molecules. Is specific for agar and agarose and does not digest alginate or carrageenan. The polypeptide is Beta-agarase (Pseudoalteromonas atlantica (Alteromonas atlantica)).